A 644-amino-acid polypeptide reads, in one-letter code: Tripeptidyl-peptidase sed1 (644 aa).

The signal sequence occupies residues 1-18 (MRLSHVLLGTAAAAGVLA). Residues 19-196 (SPTPNDYVVH…KARSIEKRSF (178 aa)) constitute a propeptide, removed in mature form. One can recognise a Peptidase S53 domain in the interval 224–643 (AITPLCISAL…PALLDLFMSL (420 aa)). The N-linked (GlcNAc...) asparagine glycan is linked to asparagine 235. Residues glutamate 300 and aspartate 304 each act as charge relay system in the active site. N-linked (GlcNAc...) asparagine glycosylation is found at asparagine 326, asparagine 332, and asparagine 519. The active-site Charge relay system is serine 561. Ca(2+) contacts are provided by aspartate 602, isoleucine 603, glycine 621, and aspartate 623.

The cofactor is Ca(2+). N-glycosylated.

The protein resides in the secreted. The protein localises to the extracellular space. It carries out the reaction Release of an N-terminal tripeptide from a polypeptide.. Functionally, secreted tripeptidyl-peptidase which degrades proteins at acidic pHs and is involved in virulence. This chain is Tripeptidyl-peptidase sed1 (sed1), found in Aspergillus fumigatus (strain ATCC MYA-4609 / CBS 101355 / FGSC A1100 / Af293) (Neosartorya fumigata).